The chain runs to 282 residues: Pantothenate synthetase (282 aa).

Residue 30-37 (MGYLHEGH) participates in ATP binding. Residue H37 is the Proton donor of the active site. Q61 provides a ligand contact to (R)-pantoate. Residue Q61 coordinates beta-alanine. An ATP-binding site is contributed by 147-150 (GMKD). Q153 contributes to the (R)-pantoate binding site. Residues V176 and 184–187 (KSSR) each bind ATP.

The protein belongs to the pantothenate synthetase family. Homodimer.

Its subcellular location is the cytoplasm. The enzyme catalyses (R)-pantoate + beta-alanine + ATP = (R)-pantothenate + AMP + diphosphate + H(+). It participates in cofactor biosynthesis; (R)-pantothenate biosynthesis; (R)-pantothenate from (R)-pantoate and beta-alanine: step 1/1. In terms of biological role, catalyzes the condensation of pantoate with beta-alanine in an ATP-dependent reaction via a pantoyl-adenylate intermediate. This chain is Pantothenate synthetase, found in Bacillus thuringiensis subsp. konkukian (strain 97-27).